Consider the following 251-residue polypeptide: Probable transcriptional regulatory protein BLA_1344 (251 aa).

This sequence belongs to the TACO1 family.

The protein resides in the cytoplasm. The sequence is that of Probable transcriptional regulatory protein BLA_1344 from Bifidobacterium animalis subsp. lactis (strain AD011).